Consider the following 212-residue polypeptide: Uracil phosphoribosyltransferase (212 aa).

Residues Arg-78, Arg-103, and 130-138 each bind 5-phospho-alpha-D-ribose 1-diphosphate; that span reads DPMLATGGS. Residues Ile-193 and 198–200 contribute to the uracil site; that span reads GDA. A 5-phospho-alpha-D-ribose 1-diphosphate-binding site is contributed by Asp-199.

It belongs to the UPRTase family. Mg(2+) is required as a cofactor.

It catalyses the reaction UMP + diphosphate = 5-phospho-alpha-D-ribose 1-diphosphate + uracil. The protein operates within pyrimidine metabolism; UMP biosynthesis via salvage pathway; UMP from uracil: step 1/1. Its activity is regulated as follows. Allosterically activated by GTP. Functionally, catalyzes the conversion of uracil and 5-phospho-alpha-D-ribose 1-diphosphate (PRPP) to UMP and diphosphate. The polypeptide is Uracil phosphoribosyltransferase (Stutzerimonas stutzeri (strain A1501) (Pseudomonas stutzeri)).